Here is a 249-residue protein sequence, read N- to C-terminus: Proteasome activator complex subunit 1 (249 aa).

Residues 60-101 (PLDIPVPDPVKEKEKGERKKQQEKEDKDEKKKGEDEDKGPPC) form a disordered region. A compositionally biased stretch (basic and acidic residues) spans 68–98 (PVKEKEKGERKKQQEKEDKDEKKKGEDEDKG).

The protein belongs to the PA28 family. In terms of assembly, heterodimer of PSME1 and PSME2, which forms a hexameric ring. PSME1 can form homoheptamers.

Functionally, implicated in immunoproteasome assembly and required for efficient antigen processing. The PA28 activator complex enhances the generation of class I binding peptides by altering the cleavage pattern of the proteasome. This is Proteasome activator complex subunit 1 (PSME1) from Macaca fascicularis (Crab-eating macaque).